Consider the following 658-residue polypeptide: Biosynthetic arginine decarboxylase (658 aa).

Lys-127 carries the N6-(pyridoxal phosphate)lysine modification. 307–317 (FDVGGGLGVDY) is a binding site for substrate.

The protein belongs to the Orn/Lys/Arg decarboxylase class-II family. SpeA subfamily. Homotetramer. Requires pyridoxal 5'-phosphate as cofactor. Mg(2+) is required as a cofactor. In terms of processing, processed post-translationally to a 70 kDa mature form. Post-translationally, the N-terminus is blocked.

It is found in the periplasm. The catalysed reaction is L-arginine + H(+) = agmatine + CO2. It functions in the pathway amine and polyamine biosynthesis; agmatine biosynthesis; agmatine from L-arginine: step 1/1. Its activity is regulated as follows. Down-regulated by polyamine end products putrescine and spermidine. In terms of biological role, catalyzes the biosynthesis of agmatine from arginine. In Escherichia coli (strain K12), this protein is Biosynthetic arginine decarboxylase (speA).